The chain runs to 343 residues: Small ribosomal subunit biogenesis GTPase RsgA (343 aa).

The CP-type G domain occupies 116-275; the sequence is RGQLKPVAAN…LIDSPGIREF (160 aa). Residues 163–166 and 217–225 contribute to the GTP site; these read NKFD and GQSGVGKSS. Residues C299, C304, H306, and C312 each coordinate Zn(2+).

Belongs to the TRAFAC class YlqF/YawG GTPase family. RsgA subfamily. Monomer. Associates with 30S ribosomal subunit, binds 16S rRNA. Requires Zn(2+) as cofactor.

The protein localises to the cytoplasm. One of several proteins that assist in the late maturation steps of the functional core of the 30S ribosomal subunit. Helps release RbfA from mature subunits. May play a role in the assembly of ribosomal proteins into the subunit. Circularly permuted GTPase that catalyzes slow GTP hydrolysis, GTPase activity is stimulated by the 30S ribosomal subunit. The chain is Small ribosomal subunit biogenesis GTPase RsgA from Pseudomonas fluorescens (strain Pf0-1).